The chain runs to 498 residues: Lysine--tRNA ligase (498 aa).

Residues glutamate 408 and glutamate 415 each coordinate Mg(2+).

The protein belongs to the class-II aminoacyl-tRNA synthetase family. As to quaternary structure, homodimer. It depends on Mg(2+) as a cofactor.

The protein resides in the cytoplasm. The catalysed reaction is tRNA(Lys) + L-lysine + ATP = L-lysyl-tRNA(Lys) + AMP + diphosphate. This chain is Lysine--tRNA ligase, found in Listeria welshimeri serovar 6b (strain ATCC 35897 / DSM 20650 / CCUG 15529 / CIP 8149 / NCTC 11857 / SLCC 5334 / V8).